A 78-amino-acid chain; its full sequence is RNA-binding protein KhpA (78 aa).

The KH domain maps to 29–78; it reads TIIYELTVAKGDIGKIIGKEGRTIKAIRTLLVSVASRDNVKVSLEIMEER.

The protein belongs to the KhpA RNA-binding protein family.

It is found in the cytoplasm. A probable RNA-binding protein. This chain is RNA-binding protein KhpA, found in Chlamydia trachomatis serovar D (strain ATCC VR-885 / DSM 19411 / UW-3/Cx).